Consider the following 424-residue polypeptide: Tyrosine--tRNA ligase (424 aa).

Tyrosine 37 is an L-tyrosine binding site. The 'HIGH' region motif lies at 42 to 51; that stretch reads PTADSLHLGH. Positions 175 and 179 each coordinate L-tyrosine. Positions 235–239 match the 'KMSKS' region motif; it reads KFGKT. Lysine 238 is a binding site for ATP. The S4 RNA-binding domain maps to 357–414; sequence ADLQQALVNAELVPSRGQARTMIGSNAVTINGEKQSNAEYNFSDADRLFGRYTLLRRG.

This sequence belongs to the class-I aminoacyl-tRNA synthetase family. TyrS type 1 subfamily. As to quaternary structure, homodimer.

It localises to the cytoplasm. It carries out the reaction tRNA(Tyr) + L-tyrosine + ATP = L-tyrosyl-tRNA(Tyr) + AMP + diphosphate + H(+). Functionally, catalyzes the attachment of tyrosine to tRNA(Tyr) in a two-step reaction: tyrosine is first activated by ATP to form Tyr-AMP and then transferred to the acceptor end of tRNA(Tyr). This Serratia proteamaculans (strain 568) protein is Tyrosine--tRNA ligase.